The chain runs to 699 residues: Condensin complex subunit 2 (699 aa).

Disordered stretches follow at residues 1–35 and 176–203; these read MSTSTPQSGGRRKPETPDSAFLSPATRPQPISAAA and ESQATEDTENQETDTGPQDGRKNPKRRK.

The protein belongs to the CND2 (condensin subunit 2) family. Component of the condensin complex, which contains the XCAP-E/SMC2 and XCAP-C/SMC4 heterodimer, and three non SMC subunits that probably regulate the complex: XCAP-H/NCAPH, XCAP-D2/NCAPD2 and XCAP-G/NCAPG. In terms of processing, phosphorylated by CDK1. Its phosphorylation, as well as that of XCAP-D2 and XCAP-G subunits, activates the condensin complex and is required for chromosome condensation.

Its subcellular location is the nucleus. It localises to the cytoplasm. The protein localises to the chromosome. Functionally, regulatory subunit of the condensin complex, a complex required for conversion of interphase chromatin into mitotic-like condense chromosomes. The condensin complex probably introduces positive supercoils into relaxed DNA in the presence of type I topoisomerases and converts nicked DNA into positive knotted forms in the presence of type II topoisomerase. The chain is Condensin complex subunit 2 (ncaph) from Xenopus laevis (African clawed frog).